Reading from the N-terminus, the 310-residue chain is Choline trimethylamine-lyase activating enzyme (310 aa).

The Radical SAM core domain occupies 17-304 (YDGPGVRTLV…EACIRKYDFP (288 aa)). The [4Fe-4S] cluster site is built by C31, C35, C38, C57, C60, C63, and C99. 37–39 (WCS) provides a ligand contact to S-adenosyl-L-methionine. 2 consecutive 4Fe-4S ferredoxin-type domains span residues 48–77 (YQVL…ISAS) and 79–109 (LRHG…VVGE). Residues G139, 188-190 (DVK), and H264 contribute to the S-adenosyl-L-methionine site.

It belongs to the organic radical-activating enzymes family. Monomer. [4Fe-4S] cluster is required as a cofactor.

The enzyme catalyses glycyl-[protein] + reduced [flavodoxin] + S-adenosyl-L-methionine = glycin-2-yl radical-[protein] + semiquinone [flavodoxin] + 5'-deoxyadenosine + L-methionine + H(+). The protein operates within amine and polyamine metabolism; choline degradation. In terms of biological role, catalyzes activation of the choline trimethylamine-lyase CutC under anaerobic conditions by generation of an organic free radical on a glycine residue, via a homolytic cleavage of S-adenosyl-L-methionine (SAM). Is involved in the anaerobic choline utilization pathway that allows D.alaskensis to grow on choline as a source of carbon and energy. The protein is Choline trimethylamine-lyase activating enzyme of Oleidesulfovibrio alaskensis (strain ATCC BAA-1058 / DSM 17464 / G20) (Desulfovibrio alaskensis).